Consider the following 442-residue polypeptide: 4-alpha-glucanotransferase (442 aa).

Residues Asp-13, Asn-15, Asp-17, Val-19, and Asp-21 each coordinate Ca(2+). Catalysis depends on Asp-186, which acts as the Nucleophile. The Proton donor role is filled by Glu-216.

Belongs to the glycosyl hydrolase 13 family. As to quaternary structure, monomer. Requires Ca(2+) as cofactor.

It is found in the cytoplasm. It catalyses the reaction Transfers a segment of a (1-&gt;4)-alpha-D-glucan to a new position in an acceptor, which may be glucose or a (1-&gt;4)-alpha-D-glucan.. Hydrolyzes the 1,4-alpha-glycoside bonds in oligomeric and polymeric 1,4-alpha-glucans and transfers oligosaccharides (maltotriose being the shortest one) to acceptor maltodextrins. The protein is 4-alpha-glucanotransferase (mgtA) of Thermotoga neapolitana.